The chain runs to 467 residues: MADGSSETKSSNQMWGGRFASGPDAIMEEINASIGFDKKLYAQDIRGSIAHATMLAHQGIISAEDKDKIVHGLDTILSEIDSGAFEFSRRLEDIHMNIEARLAALIGPAAGRLHTARSRNDQVALDFRLWVKEELQKTEKALTGLIAAFLDRAEEHAETVMPGFTHLQTAQPVTFGHHCMAYVEMFGRDRARVRHAIEHMDESPIGAAALAGTGFPIDRHMTAKALGFREPTRNSIDTVSDRDFALEFLSIAAIAATHLSRLAEEIVIWSTPQFGFIRLSDAFSTGSSIMPQKKNPDAAELVRAKTGRVNGSLVALLTVMKGLPLAYSKDMQEDKEQVFDAAESLELAIAAMTGMIRDVTIRADRMKAAAGSGYSTATDLADWLVREAGLPFRDAHHVTGRVVALAEQKGCDLADLPLAELQAINSAITDKVYGVLTVEASVASRTSFGGTAPSEVRKQIAWWRARN.

This sequence belongs to the lyase 1 family. Argininosuccinate lyase subfamily.

The protein localises to the cytoplasm. The catalysed reaction is 2-(N(omega)-L-arginino)succinate = fumarate + L-arginine. Its pathway is amino-acid biosynthesis; L-arginine biosynthesis; L-arginine from L-ornithine and carbamoyl phosphate: step 3/3. The sequence is that of Argininosuccinate lyase 1 from Rhizobium meliloti (strain 1021) (Ensifer meliloti).